The sequence spans 171 residues: Peptidyl-prolyl cis-trans isomerase 7 (171 aa).

The 164-residue stretch at 7 to 170 (FFDITIAGKP…SECLIADCGQ (164 aa)) folds into the PPIase cyclophilin-type domain.

Belongs to the cyclophilin-type PPIase family.

The catalysed reaction is [protein]-peptidylproline (omega=180) = [protein]-peptidylproline (omega=0). Its function is as follows. PPIases accelerate the folding of proteins. It catalyzes the cis-trans isomerization of proline imidic peptide bonds in oligopeptides. The protein is Peptidyl-prolyl cis-trans isomerase 7 (cyn-7) of Caenorhabditis elegans.